Reading from the N-terminus, the 150-residue chain is Ribonuclease K6 (150 aa).

The first 23 residues, 1–23 (MVLCFPLLLLLLVLWGPVCPLHA), serve as a signal peptide directing secretion. The active-site Proton acceptor is the His-38. 4 disulfide bridges follow: Cys-46-Cys-104, Cys-60-Cys-114, Cys-78-Cys-129, and Cys-85-Cys-92. Asn-55 is a glycosylation site (N-linked (GlcNAc...) asparagine). Substrate is bound by residues 61–65 (KHQNT) and Lys-86. N-linked (GlcNAc...) asparagine glycosylation is present at Asn-100. Residue Arg-105 participates in substrate binding. Catalysis depends on His-145, which acts as the Proton donor.

This sequence belongs to the pancreatic ribonuclease family. In terms of assembly, interacts (via N-terminus) with bacterial lipopolysaccharide (LPS).

It is found in the secreted. The protein resides in the lysosome. The protein localises to the cytoplasmic granule. Functionally, ribonuclease which shows a preference for the pyrimidines uridine and cytosine. Has potent antibacterial activity against a range of Gram-positive and Gram-negative bacteria, including P.aeruginosa, A.baumanii, M.luteus, S.aureus, E.faecalis, E.faecium, S.saprophyticus and E.coli. Causes loss of bacterial membrane integrity, and also promotes agglutination of Gram-negative bacteria. Probably contributes to urinary tract sterility. Bactericidal activity is independent of RNase activity. In Gorilla gorilla gorilla (Western lowland gorilla), this protein is Ribonuclease K6 (RNASE6).